Reading from the N-terminus, the 127-residue chain is Small ribosomal subunit protein uS13 (127 aa).

The interval 90-127 (KRHREGLPVNGQRTRTNARTRKGKRKTVAGRSQSTQKK) is disordered. A compositionally biased stretch (basic residues) spans 105-117 (TNARTRKGKRKTV).

It belongs to the universal ribosomal protein uS13 family. As to quaternary structure, part of the 30S ribosomal subunit. Forms a loose heterodimer with protein S19. Forms two bridges to the 50S subunit in the 70S ribosome.

Functionally, located at the top of the head of the 30S subunit, it contacts several helices of the 16S rRNA. In the 70S ribosome it contacts the 23S rRNA (bridge B1a) and protein L5 of the 50S subunit (bridge B1b), connecting the 2 subunits; these bridges are implicated in subunit movement. Contacts the tRNAs in the A and P-sites. This is Small ribosomal subunit protein uS13 from Salinibacter ruber (strain DSM 13855 / M31).